The primary structure comprises 83 residues: Ferredoxin (83 aa).

2 4Fe-4S ferredoxin-type domains span residues 2–29 (ALMI…QGDE) and 31–64 (YVIE…KDPS). Residues Cys-9, Cys-12, Cys-15, Cys-19, Cys-38, Cys-41, Cys-50, and Cys-54 each contribute to the [4Fe-4S] cluster site.

[4Fe-4S] cluster serves as cofactor.

Its function is as follows. Ferredoxins are iron-sulfur proteins that transfer electrons in a wide variety of metabolic reactions. The polypeptide is Ferredoxin (fdx) (Allochromatium vinosum (strain ATCC 17899 / DSM 180 / NBRC 103801 / NCIMB 10441 / D) (Chromatium vinosum)).